Reading from the N-terminus, the 609-residue chain is Glutamine--fructose-6-phosphate aminotransferase [isomerizing] (609 aa).

The active-site Nucleophile; for GATase activity is the cysteine 2. The Glutamine amidotransferase type-2 domain occupies 2-217; that stretch reads CGIVGAIAGR…DGDTAEIRRD (216 aa). SIS domains are found at residues 285-425 and 458-599; these read AESV…LRGA and WAEC…VDKP. Residue lysine 604 is the For Fru-6P isomerization activity of the active site.

In terms of assembly, homodimer.

The protein resides in the cytoplasm. The enzyme catalyses D-fructose 6-phosphate + L-glutamine = D-glucosamine 6-phosphate + L-glutamate. Catalyzes the first step in hexosamine metabolism, converting fructose-6P into glucosamine-6P using glutamine as a nitrogen source. This chain is Glutamine--fructose-6-phosphate aminotransferase [isomerizing], found in Xylella fastidiosa (strain Temecula1 / ATCC 700964).